Here is a 388-residue protein sequence, read N- to C-terminus: Subtilisin-like serine protease AsES (388 aa).

The first 15 residues, 1-15 (MRLSLVLALLPVAFG), serve as a signal peptide directing secretion. The propeptide at 16-105 (APTRRDEPAP…IEQDAIVTLA (90 aa)) is removed in mature form. In terms of domain architecture, Peptidase S8 spans 114–388 (PWGLARISTR…RLAFNGNPSG (275 aa)). A disulfide bridge connects residues Cys141 and Cys230. Catalysis depends on charge relay system residues Asp146 and His176. N-linked (GlcNAc...) asparagine glycans are attached at residues Asn232 and Asn237. Cysteines 285 and 357 form a disulfide. Ser331 (charge relay system) is an active-site residue.

The protein belongs to the peptidase S8 family.

The protein resides in the secreted. Its activity is regulated as follows. The elicitor proteolytic activity is completely inhibited by PMSF. The activity is also significantly reduced by aprotinin (leading to 37% residual activity), by leupeptin (leading to 54% residual activity), by the ovomucoid trypsin inhibitor (leading to 65% residual activity), and by p-aminobenzamidine (leading to 26% residual activity). Extracellular elicitor protein that induces a strong defense response in strawberry and confers both local and systemic plant resistance against the fungal pathogen Colletotricum acutatum, the casual agent of anthracnose disease. AsES activates a cascade of defense responses, including calcium influx, oxidative burst, hypersensitive cell-death response (HR), accumulation of autofluorescent compounds, cell-wall reinforcement with callose and lignin deposition, salicylic acid accumulation, and expression of defense-related genes, such as PR1, PG1, MYB30, RBOH-D, RBOH-F, CHI23, and FLS. The oxidative burst consists in a progressive extracellular accumulation of H(2)O(2) that starts immediately after the contact with AsES and is preceded by a rapid and transient cell membrane depolarization. During this phase takes place also a rapid intracellular accumulation of NO at the chloroplasts. After the first extracellular H(2)O(2) production phase, two intracellular H(2)O(2) accumulation events occur, the first 2 hours after induction, and the second 7 hours after induction. AsES also produces a transient increase of ion leakage, and a progressive alkalinization of the extracellular medium. Confers also local and systemic plant resistance against Botrytis cinerea in Arabidopsis thaliana. Systemic, but not local resistance is dependent on the length of exposure to AsES. The protection to B.cinerea is due to the induction of the plant defenses via the salicylic acid, jasmonic acid and ethylene signaling pathways. Exhibits subtilisin-like proteolytic activity which is necessary but not sufficient for its elicitor function in strawberry plants. Probably induces defense by means of proteolysis of one or multiple host proteins that are specific targets of this protease. This is Subtilisin-like serine protease AsES from Sarocladium strictum (Black bundle disease fungus).